A 151-amino-acid chain; its full sequence is 3-dehydroquinate dehydratase (151 aa).

The active-site Proton acceptor is the tyrosine 26. Asparagine 75, histidine 81, and aspartate 88 together coordinate substrate. Residue histidine 101 is the Proton donor of the active site. Residues 102-103 (LS) and arginine 112 contribute to the substrate site.

The protein belongs to the type-II 3-dehydroquinase family. As to quaternary structure, homododecamer.

It catalyses the reaction 3-dehydroquinate = 3-dehydroshikimate + H2O. The protein operates within metabolic intermediate biosynthesis; chorismate biosynthesis; chorismate from D-erythrose 4-phosphate and phosphoenolpyruvate: step 3/7. Catalyzes a trans-dehydration via an enolate intermediate. The sequence is that of 3-dehydroquinate dehydratase from Shewanella sediminis (strain HAW-EB3).